A 532-amino-acid chain; its full sequence is MKAFTSLLCGLGLSTTLAKAISLQRPLGLDKDVLLQAAEKFGLDLDLDHLLKELDSNVLDAWAQIEHLYPNQVMSLETSTKPKFPEAIKTKKDWDFVVKNDAIENYQLRVNKIKDPKILGIDPNVTQYTGYLDVEDEDKHFFFWTFESRNDPAKDPVILWLNGGPGCSSLTGLFFELGPSSIGPDLKPIGNPYSWNSNATVIFLDQPVNVGFSYSGSSGVSNTVAAGKDVYNFLELFFDQFPEYVNKGQDFHIAGESYAGHYIPVFASEILSHKDRNFNLTSVLIGNGLTDPLTQYNYYEPMACGEGGEPSVLPSEECSAMEDSLERCLGLIESCYDSQSVWSCVPATIYCNNAQLAPYQRTGRNVYDIRKDCEGGNLCYPTLQDIDDYLNQDYVKEAVGAEVDHYESCNFDINRNFLFAGDWMKPYHTAVTDLLNQDLPILVYAGDKDFICNWLGNKAWTDVLPWKYDEEFASQKVRNWTASITDEVAGEVKSYKHFTYLRVFNGGHMVPFDVPENALSMVNEWIHGGFSL.

The signal sequence occupies residues 1-20 (MKAFTSLLCGLGLSTTLAKA). A propeptide spans 21–111 (ISLQRPLGLD…AIENYQLRVN (91 aa)) (mediates translocation across the endoplasmic reticulum, renders the enzyme inactive during transit, and targets the molecule to the vacuole). The Vacuolar targeting signal motif lies at 24–27 (QRPL). Residues asparagine 124 and asparagine 198 are each glycosylated (N-linked (GlcNAc...) (high mannose) asparagine). 5 disulfide bridges follow: cysteine 167/cysteine 409, cysteine 304/cysteine 318, cysteine 328/cysteine 351, cysteine 335/cysteine 344, and cysteine 373/cysteine 379. The active site involves serine 257. A glycan (N-linked (GlcNAc...) (high mannose) asparagine) is linked at asparagine 279. Aspartate 449 is an active-site residue. Cysteine 452 is a binding site for substrate. Residue asparagine 479 is glycosylated (N-linked (GlcNAc...) (high mannose) asparagine). The active site involves histidine 508. Methionine 509 is a substrate binding site.

The protein belongs to the peptidase S10 family. Post-translationally, enters the endoplasmic reticulum as an inactive zymogen and is modified by four N-linked core oligosaccharides, giving rise to a precursor known as P1 (67 kDa). As P1 transits through the Golgi, extension of its core oligosaccharides leads to the Golgi-modified P2 precursor (69 kDa). P2 is sorted away from secretory proteins at or beyond a late Golgi compartment and is subsequently delivered to the vacuole via a prevacuolar endosome-like compartment. Upon arrival in the vacuole, the N-terminal prosegment of P2 is cleaved by vacuolar proteases to yield the enzymatically active mature vacuolar form of CPY (61 kDa). The four high mannose core N-glycans found in mature CPY are Man(11-15)GlcNAc(2) at Asn-124, Man(8-12)GlcNAc(2) at Asn-198, Man(9-14)GlcNAc(2) at Asn-279 and phosphorylated Man(12-17)GlcNAc(2) as well as Man(11-16)GlcNAc(2) at Asn-479.

The protein resides in the vacuole lumen. It catalyses the reaction Release of a C-terminal amino acid with broad specificity.. Its activity is regulated as follows. Inhibited by ZPCK. Vacuolar serine-type carboxypeptidase involved in degradation of small peptides. Digests preferentially peptides containing an aliphatic or hydrophobic residue in P1' position, as well as methionine, leucine or phenylalanine in P1 position of ester substrate. Also plays a role in breakdown of the autophagic body and the autophagosome-dependent protein synthesis. Plays a key role in phytochelatin (PC) synthesis from glutathione (GSH) by cleaving the Gly from GSH and form the PC-peptides of the structure (gamma-Glu-Cys)2-Gly. Also involved in resistance to xenobiotics via the degradation of glutathione-S-conjugates. This Saccharomyces cerevisiae (strain ATCC 204508 / S288c) (Baker's yeast) protein is Carboxypeptidase Y.